The primary structure comprises 299 residues: MSEPIDLSQIAPTLKAEILAEALPYIRRYHGKTVVIKYGGNAMTEERLKQGFARDVILLKLVGINPVIVHGGGPQIDHALKKIGKAGTFIQGMRVTDEETMEVVEWVLGGEVQQDIVMLINHFGGHAVGLTGKDGGLIHARKLLMPDRDNPGQYIDIGQVGEVEAINPAVVKALQDDAFIPVISPIGFGEDGLSYNINADLVAGKLATVLNAEKLLMMTNIPGVMDKDGNLLTDLSAREIDALFEDGTISGGMLPKISSALDAAKSGVKSVHIVDGRIEHSVLLEILTEQPFGTMIRSH.

Substrate contacts are provided by residues 72–73 (GG), arginine 94, and asparagine 196.

The protein belongs to the acetylglutamate kinase family. ArgB subfamily.

It is found in the cytoplasm. The catalysed reaction is N-acetyl-L-glutamate + ATP = N-acetyl-L-glutamyl 5-phosphate + ADP. It functions in the pathway amino-acid biosynthesis; L-arginine biosynthesis; N(2)-acetyl-L-ornithine from L-glutamate: step 2/4. Its function is as follows. Catalyzes the ATP-dependent phosphorylation of N-acetyl-L-glutamate. The sequence is that of Acetylglutamate kinase from Burkholderia cenocepacia (strain HI2424).